Here is a 538-residue protein sequence, read N- to C-terminus: Calcium-dependent protein kinase 32 (538 aa).

Residues 1 to 37 (MGNCCGTAGSLAQNDNKPKKGRKKQNPFSIDYGLHHG) form a disordered region. The N-myristoyl glycine moiety is linked to residue Gly2. Positions 63–321 (YTLGRELGRG…AQQVLDHPWL (259 aa)) constitute a Protein kinase domain. ATP is bound by residues 69 to 77 (LGRGEFGVT) and Lys92. Asp187 functions as the Proton acceptor in the catalytic mechanism. At Ser227 the chain carries Phosphoserine. An autoinhibitory domain region spans residues 327 to 357 (APNVSLGETVRARLKQFTVMNKLKKRALRVI). EF-hand domains lie at 364 to 399 (EEASGIREGFQIMDTSQRGKINIDELKIGLQKLGHA), 400 to 435 (IPQDDLQILMDAGDIDRDGYLDCDEFIAISVHLRKM), 436 to 470 (GNDEHLKKAFAFFDQNNNGYIEIEELREALSDELG), and 471 to 506 (TSEEVVDAIIRDVDTDKDGRISYEEFVTMMKTGTDW). Positions 377, 379, 383, 388, 413, 415, 417, 419, 424, 449, 451, 453, 455, 460, 484, 486, 488, and 490 each coordinate Ca(2+). Ser492 is modified (phosphoserine). Glu495 contributes to the Ca(2+) binding site.

It belongs to the protein kinase superfamily. Ser/Thr protein kinase family. CDPK subfamily. Interacts with ABF4. Interacts with CNGC18. Expressed in embryos and most of the vegetative tissues.

The protein resides in the nucleus. The protein localises to the membrane. It carries out the reaction L-seryl-[protein] + ATP = O-phospho-L-seryl-[protein] + ADP + H(+). It catalyses the reaction L-threonyl-[protein] + ATP = O-phospho-L-threonyl-[protein] + ADP + H(+). Activated by calcium. Autophosphorylation may play an important role in the regulation of the kinase activity. In terms of biological role, may play a role in signal transduction pathways that involve calcium as a second messenger. Involved in maintaining Ca2+ homeostasis in pollen tube tips by regulating CNGC18. Functions as regulator of the calcium-mediated abscisic acid (ABA) signaling pathway. Phosphorylates ABA-responsive transcription factor ABF4 in vitro. This Arabidopsis thaliana (Mouse-ear cress) protein is Calcium-dependent protein kinase 32.